A 278-amino-acid chain; its full sequence is Large ribosomal subunit protein uL2c (278 aa).

Positions 224-267 are disordered; it reads VVMNPVDHPHGGGEGRAPIGRKKPLTPWGHTALGGRSRKNHKYS.

Belongs to the universal ribosomal protein uL2 family. Part of the 50S ribosomal subunit.

It is found in the plastid. Its subcellular location is the chloroplast. This Huperzia lucidula (Shining clubmoss) protein is Large ribosomal subunit protein uL2c (rpl2).